The following is a 71-amino-acid chain: Protein bdm (71 aa).

The protein is Protein bdm (bdm) of Escherichia coli (strain K12).